Consider the following 216-residue polypeptide: MFNEVHSSHGHTLLLITKPSLQATALLQHLKQSLAITGKLHNIQRSLEDISAGCIVLMDMMEADKKLIHYWQDNLSRKNNNIKTLLLNTPDDYPYREIENWPHINGVFYATEDQEHVVSGLQGILRGECYFSQKLASYLITHSGNYRYNSTESALLTHREKEILNKLRIGASNNEIARSLFISENTVKTHLYNLFKKIAVKNRTQAVSWANDNLRR.

The HTH luxR-type domain occupies 149 to 214 (NSTESALLTH…QAVSWANDNL (66 aa)). Residues 173-192 (NNEIARSLFISENTVKTHLY) constitute a DNA-binding region (H-T-H motif).

Its function is as follows. The master regulator for adhesive curli fimbriae expression; necessary for transcription of the csgAB operon. Plays a positive role in biofilm formation. The sequence is that of Probable csgAB operon transcriptional regulatory protein from Salmonella typhimurium (strain LT2 / SGSC1412 / ATCC 700720).